The primary structure comprises 167 residues: Leptin (167 aa).

A signal peptide spans 1–21; sequence MHWGTLCGFLWLWPYLFYVQA. Cys-117 and Cys-167 are oxidised to a cystine.

This sequence belongs to the leptin family. In terms of assembly, interacts with SIGLEC6. Adipose tissue is the main source of leptin. It is also produced by other peripheral tissues such as the skeletal muscle. Expressed by intercalated and striated tracts of submandibular and parotid salivary gland intralobular ducts. Detected by fundic epithelium of the gastric mucosa. Secreted into blood and gastric juice.

It localises to the secreted. Functionally, key player in the regulation of energy balance and body weight control. Once released into the circulation, has central and peripheral effects by binding LEPR, found in many tissues, which results in the activation of several major signaling pathways. In the hypothalamus, acts as an appetite-regulating factor that induces a decrease in food intake and an increase in energy consumption by inducing anorexinogenic factors and suppressing orexigenic neuropeptides, also regulates bone mass and secretion of hypothalamo-pituitary-adrenal hormones. In the periphery, increases basal metabolism, influences reproductive function, regulates pancreatic beta-cell function and insulin secretion, is pro-angiogenic for endothelial cell and affects innate and adaptive immunity. In the arcuate nucleus of the hypothalamus, activates by depolarization POMC neurons inducing FOS and SOCS3 expression to release anorexigenic peptides and inhibits by hyperpolarization NPY neurons inducing SOCS3 with a consequent reduction on release of orexigenic peptides. In addition to its known satiety inducing effect, has a modulatory role in nutrient absorption. In the intestine, reduces glucose absorption by enterocytes by activating PKC and leading to a sequential activation of p38, PI3K and ERK signaling pathways which exerts an inhibitory effect on glucose absorption. Acts as a growth factor on certain tissues, through the activation of different signaling pathways increases expression of genes involved in cell cycle regulation such as CCND1, via JAK2-STAT3 pathway, or VEGFA, via MAPK1/3 and PI3K-AKT1 pathways. May also play an apoptotic role via JAK2-STAT3 pathway and up-regulation of BIRC5 expression. Pro-angiogenic, has mitogenic activity on vascular endothelial cells and plays a role in matrix remodeling by regulating the expression of matrix metalloproteinases (MMPs) and tissue inhibitors of metalloproteinases (TIMPs). In innate immunity, modulates the activity and function of neutrophils by increasing chemotaxis and the secretion of oxygen radicals. Increases phagocytosis by macrophages and enhances secretion of pro-inflammatory mediators. Increases cytotoxic ability of NK cells. Plays a pro-inflammatory role, in synergy with IL1B, by inducing NOS2 which promotes the production of IL6, IL8 and Prostaglandin E2, through a signaling pathway that involves JAK2, PI3K, MAP2K1/MEK1 and MAPK14/p38. In adaptive immunity, promotes the switch of memory T-cells towards T helper-1 cell immune responses. Increases CD4(+)CD25(-) T-cell proliferation and reduces autophagy during TCR (T-cell receptor) stimulation, through MTOR signaling pathway activation and BCL2 up-regulation. This is Leptin from Homo sapiens (Human).